A 238-amino-acid polypeptide reads, in one-letter code: Ribosomal RNA small subunit methyltransferase G (238 aa).

S-adenosyl-L-methionine is bound by residues Gly77, Phe82, 128-129, and Arg147; that span reads AE.

It belongs to the methyltransferase superfamily. RNA methyltransferase RsmG family.

It localises to the cytoplasm. Its function is as follows. Specifically methylates the N7 position of guanine in position 535 of 16S rRNA. This Listeria welshimeri serovar 6b (strain ATCC 35897 / DSM 20650 / CCUG 15529 / CIP 8149 / NCTC 11857 / SLCC 5334 / V8) protein is Ribosomal RNA small subunit methyltransferase G.